Here is a 156-residue protein sequence, read N- to C-terminus: 6,7-dimethyl-8-ribityllumazine synthase (156 aa).

Residues W28, 60-62 (SFE), and 82-84 (VVV) each bind 5-amino-6-(D-ribitylamino)uracil. (2S)-2-hydroxy-3-oxobutyl phosphate is bound at residue 87 to 88 (GT). The Proton donor role is filled by H90. Residue F115 coordinates 5-amino-6-(D-ribitylamino)uracil. R129 serves as a coordination point for (2S)-2-hydroxy-3-oxobutyl phosphate.

Belongs to the DMRL synthase family.

It carries out the reaction (2S)-2-hydroxy-3-oxobutyl phosphate + 5-amino-6-(D-ribitylamino)uracil = 6,7-dimethyl-8-(1-D-ribityl)lumazine + phosphate + 2 H2O + H(+). The protein operates within cofactor biosynthesis; riboflavin biosynthesis; riboflavin from 2-hydroxy-3-oxobutyl phosphate and 5-amino-6-(D-ribitylamino)uracil: step 1/2. Its function is as follows. Catalyzes the formation of 6,7-dimethyl-8-ribityllumazine by condensation of 5-amino-6-(D-ribitylamino)uracil with 3,4-dihydroxy-2-butanone 4-phosphate. This is the penultimate step in the biosynthesis of riboflavin. The protein is 6,7-dimethyl-8-ribityllumazine synthase of Kocuria rhizophila (strain ATCC 9341 / DSM 348 / NBRC 103217 / DC2201).